Reading from the N-terminus, the 552-residue chain is DNA ligase (552 aa).

Residue E229 participates in ATP binding. Residue K231 is the N6-AMP-lysine intermediate of the active site. Residues R236 and E283 each contribute to the ATP site. E283 and E377 together coordinate Mg(2+). 2 residues coordinate ATP: K382 and K397.

It belongs to the ATP-dependent DNA ligase family. As to quaternary structure, interacts with host TOP2A and TOP2B. Requires Mg(2+) as cofactor.

It localises to the host cytoplasm. It carries out the reaction ATP + (deoxyribonucleotide)n-3'-hydroxyl + 5'-phospho-(deoxyribonucleotide)m = (deoxyribonucleotide)n+m + AMP + diphosphate.. Functionally, DNA ligase that seals nicks in double-stranded DNA during DNA replication, DNA recombination and DNA repair. Recruits cellular topoisomerase II to sites of viral replication and assembly. Contributes to the repair of the viral genome following UV irradiation. In Vaccinia virus (strain Western Reserve) (VACV), this protein is DNA ligase (OPG180).